The following is a 475-amino-acid chain: Methylenomycin A resistance protein (475 aa).

14 consecutive transmembrane segments (helical) span residues 28–48 (ITAL…VNVA), 65–85 (WIVD…GGLA), 93–113 (VYLW…LAPT), 123–143 (VQGA…VFSF), 152–172 (MLGL…TVGG), 173–193 (LMVS…IGAI), 212–232 (LAVP…FALI), 240–260 (TAGP…LLAL), 285–305 (LVGF…GLYF), 314–334 (FQAG…NIVY), 346–366 (LLTA…TITA), 371–391 (WVVA…SPGM), 416–436 (QIGS…TSDW), and 439–459 (GAAI…LSAW).

It belongs to the major facilitator superfamily.

It is found in the cell membrane. Resistance to the epoxide antibiotic methylenomycin A; probably by mediating its efflux. The polypeptide is Methylenomycin A resistance protein (mmr) (Streptomyces coelicolor (strain ATCC BAA-471 / A3(2) / M145)).